Consider the following 440-residue polypeptide: Ribosomal protein uS12 methylthiotransferase RimO (440 aa).

The MTTase N-terminal domain occupies 8–125 (LRCHAISLGC…WNEQILLALN (118 aa)). 6 residues coordinate [4Fe-4S] cluster: Cys-17, Cys-52, Cys-87, Cys-152, Cys-156, and Cys-159. The Radical SAM core domain occupies 138–368 (TTGKSYAWLK…MEIQLKISEK (231 aa)). The 69-residue stretch at 371–439 (KNFVGKRLSL…SYDLVALADS (69 aa)) folds into the TRAM domain.

This sequence belongs to the methylthiotransferase family. RimO subfamily. [4Fe-4S] cluster is required as a cofactor.

It localises to the cytoplasm. It carries out the reaction L-aspartate(89)-[ribosomal protein uS12]-hydrogen + (sulfur carrier)-SH + AH2 + 2 S-adenosyl-L-methionine = 3-methylsulfanyl-L-aspartate(89)-[ribosomal protein uS12]-hydrogen + (sulfur carrier)-H + 5'-deoxyadenosine + L-methionine + A + S-adenosyl-L-homocysteine + 2 H(+). In terms of biological role, catalyzes the methylthiolation of an aspartic acid residue of ribosomal protein uS12. The chain is Ribosomal protein uS12 methylthiotransferase RimO from Lawsonia intracellularis (strain PHE/MN1-00).